A 214-amino-acid chain; its full sequence is Nodulation protein A (214 aa).

This sequence belongs to the NodA family.

Its subcellular location is the cytoplasm. In terms of biological role, N-acyltransferase required for nodulation. Acts in the production of a small, heat-stable compound (Nod) that stimulates mitosis in various plant protoplasts. In Methylobacterium nodulans (strain LMG 21967 / CNCM I-2342 / ORS 2060), this protein is Nodulation protein A.